The chain runs to 157 residues: Glutaredoxin-2, mitochondrial (157 aa).

Residues 1–19 constitute a mitochondrion transit peptide; it reads MSWYRAASVGRRLVASGRI. The 101-residue stretch at 50-150 folds into the Glutaredoxin domain; that stretch reads VNQIQETISN…PLVHQCYLNK (101 aa). C61 lines the [2Fe-2S] cluster pocket. K67 contacts glutathione. C70 is modified (S-glutathionyl cysteine; alternate). A disulfide bond links C70 and C73. Residues Q102 and V114 each contribute to the glutathione site. [2Fe-2S] cluster is bound at residue C146.

The protein belongs to the glutaredoxin family. In terms of assembly, monomer; active form. Homodimer; inactive form. The homodimer is probably linked by 1 2Fe-2S cluster.

The protein localises to the mitochondrion. It localises to the nucleus. Its activity is regulated as follows. The 2Fe-2S present in the homodimer leads to inactivation of the enzyme. The 2Fe-2S may serve as a redox sensor: the presence of one-electron oxidants or reductants leading to the loss of the 2Fe-2S cluster, subsequent monomerization and activation of the enzyme. Its function is as follows. Glutathione-dependent oxidoreductase that facilitates the maintenance of mitochondrial redox homeostasis upon induction of apoptosis by oxidative stress. Involved in response to hydrogen peroxide and regulation of apoptosis caused by oxidative stress. Acts as a very efficient catalyst of monothiol reactions because of its high affinity for protein glutathione-mixed disulfides. Can receive electrons not only from glutathione (GSH), but also from thioredoxin reductase supporting both monothiol and dithiol reactions. Efficiently catalyzes both glutathionylation and deglutathionylation of mitochondrial complex I, which in turn regulates the superoxide production by the complex. Overexpression decreases the susceptibility to apoptosis and prevents loss of cardiolipin and cytochrome c release. The polypeptide is Glutaredoxin-2, mitochondrial (Glrx2) (Rattus norvegicus (Rat)).